The following is an 855-amino-acid chain: Cytosolic phospholipase A2 zeta (855 aa).

The C2 domain occupies 27–145 (EKSEPQWKHR…QLGQPCTKNF (119 aa)). Ca(2+) is bound by residues Asp-60, Asp-66, Asp-116, Asp-118, and Asp-123. The region spanning 304–855 (MSSSGDLDLR…RRQAGGRVGG (552 aa)) is the PLA2c domain. Ser-393 functions as the Nucleophile in the catalytic mechanism. The active-site Proton acceptor is Asp-685.

Ca(2+) serves as cofactor. As to expression, strongly expressed in thyroid, expressed at intermediate level in stomach and at very low level in large intestine and prostate.

The protein resides in the cytoplasm. Its subcellular location is the cytosol. It localises to the cell membrane. It is found in the mitochondrion. It catalyses the reaction a 1,2-diacyl-sn-glycero-3-phosphocholine + H2O = a 1-acyl-sn-glycero-3-phosphocholine + a fatty acid + H(+). The enzyme catalyses a 1-O-alkyl-2-acyl-sn-glycero-3-phosphocholine + H2O = a 1-O-alkyl-sn-glycero-3-phosphocholine + a fatty acid + H(+). The catalysed reaction is 1-hexadecanoyl-2-(9Z-octadecenoyl)-sn-glycero-3-phosphocholine + H2O = 2-(9Z-octadecenoyl)-sn-glycero-3-phosphocholine + hexadecanoate + H(+). It carries out the reaction 1-hexadecanoyl-2-(9Z,12Z-octadecadienoyl)-sn-glycero-3-phosphocholine + H2O = (9Z,12Z)-octadecadienoate + 1-hexadecanoyl-sn-glycero-3-phosphocholine + H(+). It catalyses the reaction 1-hexadecanoyl-2-(5Z,8Z,11Z,14Z-eicosatetraenoyl)-sn-glycero-3-phosphocholine + H2O = 1-hexadecanoyl-sn-glycero-3-phosphocholine + (5Z,8Z,11Z,14Z)-eicosatetraenoate + H(+). The enzyme catalyses 1-hexadecanoyl-2-(9Z,12Z-octadecadienoyl)-sn-glycero-3-phosphoethanolamine + H2O = 1-hexadecanoyl-sn-glycero-3-phosphoethanolamine + (9Z,12Z)-octadecadienoate + H(+). The catalysed reaction is 1-hexadecanoyl-2-(5Z,8Z,11Z,14Z-eicosatetraenoyl)-sn-glycero-3-phosphoethanolamine + H2O = 1-hexadecanoyl-sn-glycero-3-phosphoethanolamine + (5Z,8Z,11Z,14Z)-eicosatetraenoate + H(+). It carries out the reaction 1-(5Z,8Z,11Z,14Z-eicosatetraenoyl)-2-O-hexadecyl-sn-glycero-3-phosphocholine + H2O = 2-O-hexadecyl-sn-glycero-3-phosphocholine + (5Z,8Z,11Z,14Z)-eicosatetraenoate + H(+). It catalyses the reaction 1-O-hexadecyl-2-(5Z,8Z,11Z,14Z)-eicosatetraenoyl-sn-glycero-3-phosphocholine + H2O = 1-O-hexadecyl-sn-glycero-3-phosphocholine + (5Z,8Z,11Z,14Z)-eicosatetraenoate + H(+). The enzyme catalyses 1-hexadecanoyl-sn-glycero-3-phosphocholine + H2O = sn-glycerol 3-phosphocholine + hexadecanoate + H(+). Stimulated by cytosolic Ca(2+). Functionally, has calcium-dependent phospholipase and lysophospholipase activities with a potential role in membrane lipid remodeling and biosynthesis of lipid mediators. Preferentially hydrolyzes the ester bond of the fatty acyl group attached at sn-2 position of phospholipids (phospholipase A2 activity). Selectively hydrolyzes sn-2 arachidonoyl group from membrane phospholipids, providing the precursor for eicosanoid biosynthesis. In myocardial mitochondria, plays a major role in arachidonate release that is metabolically channeled to the formation of cardioprotective eicosanoids, epoxyeicosatrienoates (EETs). The protein is Cytosolic phospholipase A2 zeta (Pla2g4f) of Mus musculus (Mouse).